Consider the following 363-residue polypeptide: Ribosomal RNA large subunit methyltransferase M (363 aa).

S-adenosyl-L-methionine-binding positions include serine 190, 223–226 (CPGG), aspartate 242, aspartate 262, and aspartate 279. The Proton acceptor role is filled by lysine 308.

It belongs to the class I-like SAM-binding methyltransferase superfamily. RNA methyltransferase RlmE family. RlmM subfamily. In terms of assembly, monomer.

It localises to the cytoplasm. It catalyses the reaction cytidine(2498) in 23S rRNA + S-adenosyl-L-methionine = 2'-O-methylcytidine(2498) in 23S rRNA + S-adenosyl-L-homocysteine + H(+). In terms of biological role, catalyzes the 2'-O-methylation at nucleotide C2498 in 23S rRNA. The polypeptide is Ribosomal RNA large subunit methyltransferase M (Aliivibrio salmonicida (strain LFI1238) (Vibrio salmonicida (strain LFI1238))).